The chain runs to 384 residues: S-adenosylmethionine synthase (384 aa).

His-15 lines the ATP pocket. Asp-17 is a Mg(2+) binding site. Glu-43 lines the K(+) pocket. The L-methionine site is built by Glu-56 and Gln-99. Residues 99-109 (QSPDINQGVDR) are flexible loop. ATP-binding positions include 164 to 166 (DAK), 230 to 231 (RF), Asp-239, 245 to 246 (RK), Ala-262, and Lys-266. L-methionine is bound at residue Asp-239. Lys-270 serves as a coordination point for L-methionine.

This sequence belongs to the AdoMet synthase family. Homotetramer; dimer of dimers. Requires Mg(2+) as cofactor. K(+) serves as cofactor.

It localises to the cytoplasm. It catalyses the reaction L-methionine + ATP + H2O = S-adenosyl-L-methionine + phosphate + diphosphate. The protein operates within amino-acid biosynthesis; S-adenosyl-L-methionine biosynthesis; S-adenosyl-L-methionine from L-methionine: step 1/1. Catalyzes the formation of S-adenosylmethionine (AdoMet) from methionine and ATP. The overall synthetic reaction is composed of two sequential steps, AdoMet formation and the subsequent tripolyphosphate hydrolysis which occurs prior to release of AdoMet from the enzyme. The polypeptide is S-adenosylmethionine synthase (Edwardsiella ictaluri (strain 93-146)).